The chain runs to 280 residues: Dexamethasone-induced Ras-related protein 1 (280 aa).

Cys-11 is modified (S-nitrosocysteine). A GTP-binding site is contributed by 31–38; it reads GSSKVGKT. Residues 53–61 carry the Effector region motif; the sequence is YTPTIEDFH. Residues 78–82 and 145–148 contribute to the GTP site; these read DTSGN and NKGD. The residue at position 277 (Cys-277) is a Cysteine methyl ester. Residue Cys-277 is the site of S-farnesyl cysteine attachment. The propeptide at 278–280 is removed in mature form; it reads VIS.

This sequence belongs to the small GTPase superfamily. RasD family. As to quaternary structure, forms a ternary complex with CAPON and NOS1. Component of a complex, at least composed of APBB1, RASD1/DEXRAS1 and APP. Interacts with APBB1/FE65. Forms. S-nitrosylation stimulates guanine-nucleotide exchange activity. In terms of tissue distribution, prominently found in brain at both mRNA and protein levels. Moderate expression in testis and lung. Slightly expressed in heart, spleen, skeletal muscle, liver and kidney.

The protein localises to the cell membrane. It localises to the cytoplasm. The protein resides in the perinuclear region. It is found in the nucleus. In terms of biological role, small GTPase. Negatively regulates the transcription regulation activity of the APBB1/FE65-APP complex via its interaction with APBB1/FE65. This chain is Dexamethasone-induced Ras-related protein 1 (Rasd1), found in Rattus norvegicus (Rat).